A 306-amino-acid polypeptide reads, in one-letter code: uncharacterized protein (306 aa).

Transmembrane regions (helical) follow at residues 6-26 (VQIMISHSLMIGLWASAFPGI), 37-57 (HLALFRLLIGSMALLLFAVLT), 67-87 (IPAIFLLGFLGFAFYHILLNI), 91-111 (TVSAGVASLLVTTAPIFSAML), 125-145 (WLGSMISLLGVLLIAFGAGDF), 148-168 (SMSGILVILLAAFSESIYFVF), 177-197 (GFIPFVTFTIWGGTIPMLVFL), 213-233 (LSIVYLGLLPTVIPYFALAYV), and 251-271 (ALALIISWLWIGEIPTLLSLL). EamA domains follow at residues 17-140 (GLWA…LIAF) and 160-285 (FSES…FTYL).

Belongs to the EamA transporter family.

It is found in the cell membrane. This is an uncharacterized protein from Bacillus subtilis (strain 168).